A 295-amino-acid chain; its full sequence is Pyridoxal 5'-phosphate synthase subunit PdxS (295 aa).

Aspartate 25 contributes to the D-ribose 5-phosphate binding site. The active-site Schiff-base intermediate with D-ribose 5-phosphate is lysine 82. Residue glycine 154 coordinates D-ribose 5-phosphate. Residue arginine 166 participates in D-glyceraldehyde 3-phosphate binding. Residues glycine 215 and 236 to 237 contribute to the D-ribose 5-phosphate site; that span reads GS.

The protein belongs to the PdxS/SNZ family. As to quaternary structure, in the presence of PdxT, forms a dodecamer of heterodimers.

The catalysed reaction is aldehydo-D-ribose 5-phosphate + D-glyceraldehyde 3-phosphate + L-glutamine = pyridoxal 5'-phosphate + L-glutamate + phosphate + 3 H2O + H(+). It functions in the pathway cofactor biosynthesis; pyridoxal 5'-phosphate biosynthesis. In terms of biological role, catalyzes the formation of pyridoxal 5'-phosphate from ribose 5-phosphate (RBP), glyceraldehyde 3-phosphate (G3P) and ammonia. The ammonia is provided by the PdxT subunit. Can also use ribulose 5-phosphate and dihydroxyacetone phosphate as substrates, resulting from enzyme-catalyzed isomerization of RBP and G3P, respectively. The polypeptide is Pyridoxal 5'-phosphate synthase subunit PdxS (Actinobacillus pleuropneumoniae serotype 7 (strain AP76)).